A 314-amino-acid chain; its full sequence is Ferrochelatase (314 aa).

Positions 184 and 259 each coordinate Fe cation.

The protein belongs to the ferrochelatase family.

It localises to the cytoplasm. It catalyses the reaction heme b + 2 H(+) = protoporphyrin IX + Fe(2+). Its pathway is porphyrin-containing compound metabolism; protoheme biosynthesis; protoheme from protoporphyrin-IX: step 1/1. Catalyzes the ferrous insertion into protoporphyrin IX. The protein is Ferrochelatase of Chlamydia trachomatis serovar L2 (strain ATCC VR-902B / DSM 19102 / 434/Bu).